We begin with the raw amino-acid sequence, 756 residues long: Putative DNA ligase 052L (756 aa).

The N6-AMP-lysine intermediate role is filled by lysine 103. The span at 610-620 shows a compositional bias: low complexity; sequence PSAAGSASPCR. Positions 610–630 are disordered; sequence PSAAGSASPCRPTKRRDDWFD. Residues 648 to 742 form the BRCT domain; sequence KKRPPMQGYV…LKRQRKCRAR (95 aa).

This sequence belongs to the NAD-dependent DNA ligase family.

The enzyme catalyses NAD(+) + (deoxyribonucleotide)n-3'-hydroxyl + 5'-phospho-(deoxyribonucleotide)m = (deoxyribonucleotide)n+m + AMP + beta-nicotinamide D-nucleotide.. Functionally, catalyzes the formation of phosphodiester linkages between 5'-phosphoryl and 3'-hydroxyl groups in double-stranded DNA using NAD as a coenzyme and as the energy source for the reaction. The polypeptide is Putative DNA ligase 052L (Invertebrate iridescent virus 3 (IIV-3)).